The following is a 472-amino-acid chain: MDSVALNGKSNDKPLHVAMLPWLAMGHIYPYFEVAKILAQKGHFVTFINSPKNIDRMPKTPKHLEPFIKLVKLPLPKIEHLPEGAESTMDIPSKKNCFLKKAYEGLQYAVSKLLKTSNPDWVLYDFAAAWVIPIAKSYNIPCAHYNITPAFNKVFFDPPKDKMKDYSLASICGPPTWLPFTTTIHIRPYEFLRAYEGTKDEETGERASFDLNKAYSSCDLFLLRTSRELEGDWLDYLAGNYKVPVVPVGLLPPSMQIRDVEEEDNNPDWVRIKDWLDTQESSSVVYIGFGSELKLSQEDLTELAHGIELSNLPFFWALKNLKEGVLELPEGFEERTKERGIVWKTWAPQLKILAHGAIGGCMSHCGSGSVIEKVHFGHVLVTLPYLLDQCLFSRVLEEKQVAVEVPRSEKDGSFTRVDVAKTLRFAIVDEEGSALRENAKEMGKVFSSEELHNKYIQDFIDALQKYRIPSAS.

Residue histidine 27 is the Proton acceptor of the active site. Histidine 27 lines the an anthocyanidin pocket. Aspartate 125 serves as the catalytic Charge relay. Positions 291, 347, 364, 368, 369, and 372 each coordinate UDP-beta-L-rhamnose.

Belongs to the UDP-glycosyltransferase family.

It catalyses the reaction soyasaponin III + UDP-beta-L-rhamnose = soyasaponin I + UDP + H(+). In terms of biological role, glycosyltransferase that transfers a rhamnosyl group from UDP-rhamnose to soyasaponin III in the biosynthetic pathway for soyasaponins. This Glycine max (Soybean) protein is Soyasaponin III rhamnosyltransferase (GmSGT3).